The following is a 248-amino-acid chain: Ubiquinone/menaquinone biosynthesis C-methyltransferase UbiE (248 aa).

S-adenosyl-L-methionine-binding residues include Ser68 and Asp92.

Belongs to the class I-like SAM-binding methyltransferase superfamily. MenG/UbiE family.

The enzyme catalyses a 2-demethylmenaquinol + S-adenosyl-L-methionine = a menaquinol + S-adenosyl-L-homocysteine + H(+). It catalyses the reaction a 2-methoxy-6-(all-trans-polyprenyl)benzene-1,4-diol + S-adenosyl-L-methionine = a 5-methoxy-2-methyl-3-(all-trans-polyprenyl)benzene-1,4-diol + S-adenosyl-L-homocysteine + H(+). It participates in quinol/quinone metabolism; menaquinone biosynthesis; menaquinol from 1,4-dihydroxy-2-naphthoate: step 2/2. It functions in the pathway cofactor biosynthesis; ubiquinone biosynthesis. Its function is as follows. Methyltransferase required for the conversion of demethylmenaquinol (DMKH2) to menaquinol (MKH2) and the conversion of 2-polyprenyl-6-methoxy-1,4-benzoquinol (DDMQH2) to 2-polyprenyl-3-methyl-6-methoxy-1,4-benzoquinol (DMQH2). This is Ubiquinone/menaquinone biosynthesis C-methyltransferase UbiE from Rickettsia africae (strain ESF-5).